The primary structure comprises 565 residues: Proline--tRNA ligase (565 aa).

Belongs to the class-II aminoacyl-tRNA synthetase family. ProS type 1 subfamily. Homodimer.

Its subcellular location is the cytoplasm. It catalyses the reaction tRNA(Pro) + L-proline + ATP = L-prolyl-tRNA(Pro) + AMP + diphosphate. Its function is as follows. Catalyzes the attachment of proline to tRNA(Pro) in a two-step reaction: proline is first activated by ATP to form Pro-AMP and then transferred to the acceptor end of tRNA(Pro). As ProRS can inadvertently accommodate and process non-cognate amino acids such as alanine and cysteine, to avoid such errors it has two additional distinct editing activities against alanine. One activity is designated as 'pretransfer' editing and involves the tRNA(Pro)-independent hydrolysis of activated Ala-AMP. The other activity is designated 'posttransfer' editing and involves deacylation of mischarged Ala-tRNA(Pro). The misacylated Cys-tRNA(Pro) is not edited by ProRS. This is Proline--tRNA ligase from Lactobacillus johnsonii (strain CNCM I-12250 / La1 / NCC 533).